The sequence spans 632 residues: MRISWMIGGAQGSGVDTSANIFGNAVAASGYYIYGNREYYSNIKGRHSYFNLTISDKPPRSIAQQIEILTSFDAETIFQHFNEVKDVLIYSTEVENTKAEQVQSMEPEITEHVVKFLKEKGYGTTVKDVINYLKKEKGVKVIPIDYMEILKKVADQAKVQLSVADRARNTIAIAASYKLLGLKEQYLINSITRTFRQEVFAKINTIAAQLAMQQIQPMYNLPELPNNEEKINLDGNTAAAIGKIYGGLRFQSYYPITPASDESVFIEAHQTVFTVDPKTGEKRKSTIVVVQAEDELAAINMASGAALTGVRAATATSGPGFSLMVEGMGWAGMNEVPVVITYYIRGGPSTGQPTRTSQADLMFALNAGHGEFPRIVIASGDHVEAFHDGTWALNLAQKYQTPVIHLVDKALANSYSIIPKKTLGMENIRIEKGKIVINTNTPELKRFEITEDGISPFAPLGTARVHYTGDEHDEYGFIAEASENREKMYEKRIKKLMTADKEIPEESRVNVYGNTDSKVAIITWGSPKGAILDAMEELENEGIKPMLIQIRMFSPFPKNLMRKLLNGKEFIIDVESNYFGQAGEVLKLNTGIEPTHYILKWNGRPMMRDEVKEGIKAVVQKGERRVVLHGGA.

The YPITP motif motif lies at 254-258 (YPITP). Positions 257 and 345 each coordinate substrate.

In terms of assembly, heterodimer composed of an alpha and a beta subunit.

The catalysed reaction is a 2-oxocarboxylate + 2 oxidized [2Fe-2S]-[ferredoxin] + CoA = an acyl-CoA + 2 reduced [2Fe-2S]-[ferredoxin] + CO2 + H(+). In terms of biological role, catalyzes the coenzyme A-dependent oxidative decarboxylation of different 2-oxoacids such as 2-oxoglutarate, pyruvate and 2-oxobutyrate to form their CoA derivatives. This Saccharolobus solfataricus (Sulfolobus solfataricus) protein is 2-oxoacid:ferredoxin oxidoreductase subunit alpha.